Consider the following 159-residue polypeptide: Ribosomal RNA large subunit methyltransferase H (159 aa).

Residues leucine 76, glycine 108, and 127 to 132 (LSRLTF) contribute to the S-adenosyl-L-methionine site.

Belongs to the RNA methyltransferase RlmH family. Homodimer.

The protein resides in the cytoplasm. It carries out the reaction pseudouridine(1915) in 23S rRNA + S-adenosyl-L-methionine = N(3)-methylpseudouridine(1915) in 23S rRNA + S-adenosyl-L-homocysteine + H(+). In terms of biological role, specifically methylates the pseudouridine at position 1915 (m3Psi1915) in 23S rRNA. The protein is Ribosomal RNA large subunit methyltransferase H of Syntrophomonas wolfei subsp. wolfei (strain DSM 2245B / Goettingen).